Reading from the N-terminus, the 293-residue chain is TBC1 domain family member 7 (293 aa).

The region spanning 50–231 is the Rab-GAP TBC domain; that stretch reads PLPSMYRALV…RIWDKVVSGS (182 aa).

As to quaternary structure, component of the TSC-TBC complex (also named Rhebulator complex), composed of 2 molecules of TSC1, 2 molecules of TSC2 and 1 molecule of TBC1D7. Interacts with TSC1 (via C-terminal half of the coiled-coil domain).

The protein localises to the lysosome membrane. The protein resides in the cytoplasmic vesicle. Its subcellular location is the cytoplasm. It is found in the cytosol. In terms of biological role, non-catalytic component of the TSC-TBC complex, a multiprotein complex that acts as a negative regulator of the canonical mTORC1 complex, an evolutionarily conserved central nutrient sensor that stimulates anabolic reactions and macromolecule biosynthesis to promote cellular biomass generation and growth. The TSC-TBC complex acts as a GTPase-activating protein (GAP) for the small GTPase RHEB, a direct activator of the protein kinase activity of mTORC1. In absence of nutrients, the TSC-TBC complex inhibits mTORC1, thereby preventing phosphorylation of ribosomal protein S6 kinase (RPS6KB1 and RPS6KB2) and EIF4EBP1 (4E-BP1) by the mTORC1 signaling. The TSC-TBC complex is inactivated in response to nutrients, relieving inhibition of mTORC1. The protein is TBC1 domain family member 7 (TBC1D7) of Bos taurus (Bovine).